A 191-amino-acid polypeptide reads, in one-letter code: Signal peptidase complex catalytic subunit sec11 (191 aa).

Over methionine 1–glutamine 18 the chain is Cytoplasmic. The chain crosses the membrane as a helical; Signal-anchor for type II membrane protein span at residues valine 19–phenylalanine 39. Topologically, residues threonine 40–glutamate 191 are lumenal. Residues serine 53, histidine 92, and aspartate 133 each act as charge relay system in the active site. The interval alanine 177–leucine 188 is C-terminal short (CTS) helix.

The protein belongs to the peptidase S26B family. Component of the signal peptidase complex (SPC) composed of a catalytic subunit SEC11 and three accessory subunits SPC1, SPC2 and SPC3. The complex induces a local thinning of the ER membrane which is used to measure the length of the signal peptide (SP) h-region of protein substrates. This ensures the selectivity of the complex towards h-regions shorter than 18-20 amino acids. SPC associates with the translocon complex.

The protein localises to the endoplasmic reticulum membrane. It catalyses the reaction Cleavage of hydrophobic, N-terminal signal or leader sequences from secreted and periplasmic proteins.. Its function is as follows. Catalytic component of the signal peptidase complex (SPC) which catalyzes the cleavage of N-terminal signal sequences from nascent proteins as they are translocated into the lumen of the endoplasmic reticulum. Specifically cleaves N-terminal signal peptides that contain a hydrophobic alpha-helix (h-region) shorter than 18-20 amino acids. In Aspergillus oryzae (strain ATCC 42149 / RIB 40) (Yellow koji mold), this protein is Signal peptidase complex catalytic subunit sec11 (sec11).